Reading from the N-terminus, the 411-residue chain is Tyrosine--tRNA ligase (411 aa).

Tyr-34 lines the L-tyrosine pocket. The short motif at Cys-39–Ser-48 is the 'HIGH' region element. Residues Tyr-171 and Gln-175 each contribute to the L-tyrosine site. The 'KMSKS' region motif lies at Lys-231–Thr-235. Lys-234 lines the ATP pocket. One can recognise an S4 RNA-binding domain in the interval Ile-345–Val-411.

Belongs to the class-I aminoacyl-tRNA synthetase family. TyrS type 1 subfamily. As to quaternary structure, homodimer.

The protein localises to the cytoplasm. It carries out the reaction tRNA(Tyr) + L-tyrosine + ATP = L-tyrosyl-tRNA(Tyr) + AMP + diphosphate + H(+). Its function is as follows. Catalyzes the attachment of tyrosine to tRNA(Tyr) in a two-step reaction: tyrosine is first activated by ATP to form Tyr-AMP and then transferred to the acceptor end of tRNA(Tyr). In Rickettsia prowazekii (strain Madrid E), this protein is Tyrosine--tRNA ligase.